The following is a 415-amino-acid chain: UDP-galactose transporter homolog 1 (415 aa).

The disordered stretch occupies residues 1-39; sequence MHLVPEGSESMSTQQNGSAQKPVTLNGSASTKGQAPEAP. A compositionally biased stretch (polar residues) spans 9–33; sequence ESMSTQQNGSAQKPVTLNGSASTKG. N-linked (GlcNAc...) asparagine glycosylation is found at Asn16 and Asn26. 5 consecutive transmembrane segments (helical) span residues 45–65, 95–115, 132–152, 161–181, and 185–205; these read LIQLAICVLGIYASFLSWGVL, IVLNTIQSTFAAITGFLYLYF, ILFPLLLVSISSSLASPFGYA, TFILAKSCKLLPVMFLHLTIF, and YPLYKYGVVLLVTLGVATFTL. An N-linked (GlcNAc...) asparagine glycan is attached at Asn221. A helical transmembrane segment spans residues 223 to 243; the sequence is SGSSLYGIFLLSINLLLDGLT. N-linked (GlcNAc...) asparagine glycosylation is present at Asn244. 3 helical membrane-spanning segments follow: residues 281 to 301, 325 to 345, and 368 to 388; these read LLVMPHLSSTGALHALLPIPI, NVLGFAACGAIGQLFIFYTLS, and VFWFGHTLSAGQWLGIGLVFG.

The protein belongs to the nucleotide-sugar transporter family. SLC35B subfamily.

It is found in the endoplasmic reticulum membrane. Its function is as follows. May be involved in specific transport of UDP-Gal from the cytosol to the Golgi lumen. Involved in the maintenance of optimal conditions for the folding of secretory pathway proteins in the endoplasmic reticulum. This chain is UDP-galactose transporter homolog 1 (hut1), found in Aspergillus fumigatus (strain ATCC MYA-4609 / CBS 101355 / FGSC A1100 / Af293) (Neosartorya fumigata).